The primary structure comprises 267 residues: D-aminoacyl-tRNA deacylase (267 aa).

Belongs to the DtdA deacylase family. Monomer. Zn(2+) serves as cofactor.

It carries out the reaction a D-aminoacyl-tRNA + H2O = a tRNA + a D-alpha-amino acid + H(+). It catalyses the reaction glycyl-tRNA(Ala) + H2O = tRNA(Ala) + glycine + H(+). D-aminoacyl-tRNA deacylase with broad substrate specificity. By recycling D-aminoacyl-tRNA to D-amino acids and free tRNA molecules, this enzyme counteracts the toxicity associated with the formation of D-aminoacyl-tRNA entities in vivo. This chain is D-aminoacyl-tRNA deacylase, found in Methanothrix thermoacetophila (strain DSM 6194 / JCM 14653 / NBRC 101360 / PT) (Methanosaeta thermophila).